Reading from the N-terminus, the 144-residue chain is Cell division protein SepF (144 aa).

This sequence belongs to the SepF family. In terms of assembly, homodimer. Interacts with FtsZ.

The protein localises to the cytoplasm. In terms of biological role, cell division protein that is part of the divisome complex and is recruited early to the Z-ring. Probably stimulates Z-ring formation, perhaps through the cross-linking of FtsZ protofilaments. Its function overlaps with FtsA. The chain is Cell division protein SepF from Geobacillus sp. (strain WCH70).